Here is a 415-residue protein sequence, read N- to C-terminus: Multidrug resistance protein MdtA (415 aa).

The signal sequence occupies residues 1–21 (MKSTVKKRGWVIAGIVVVALA). The interval 387 to 415 (AQTAADAAKPERGERAPTDSARAAKGARS) is disordered. The span at 394–403 (AKPERGERAP) shows a compositional bias: basic and acidic residues.

It belongs to the membrane fusion protein (MFP) (TC 8.A.1) family. Part of a tripartite efflux system composed of MdtA, MdtB and MdtC.

Its subcellular location is the cell inner membrane. This is Multidrug resistance protein MdtA from Cronobacter turicensis (strain DSM 18703 / CCUG 55852 / LMG 23827 / z3032).